Reading from the N-terminus, the 294-residue chain is Oligopeptide transport system permease protein OppC (294 aa).

6 helical membrane passes run 27 to 47 (MISTIFLVAVFLIVYIYSMFL), 94 to 114 (IAFAVTLITLVVGNILGVITG), 127 to 147 (FTDFVMILPSMMIIIVFVTII), 151 to 171 (NSWSLIGIISIFSWIGTTRLI), 202 to 224 (IWPNLSTLVIAEATLVFAGNIGL), and 260 to 280 (WTWVPATVVILIVVLAIIFIG). The ABC transmembrane type-1 domain occupies 88-280 (ARNSFNIAFA…IVVLAIIFIG (193 aa)).

It belongs to the binding-protein-dependent transport system permease family. OppBC subfamily. The complex is composed of two ATP-binding proteins (OppD and OppF), two transmembrane proteins (OppB and OppC) and a solute-binding protein (OppA).

The protein resides in the cell membrane. Part of the ABC transporter complex OppABCDF involved in the uptake of oligopeptides. Probably responsible for the translocation of the substrate across the membrane. Essential for uptake of peptides larger than three amino acids and for growth in milk. In Lactococcus lactis subsp. lactis (strain IL1403) (Streptococcus lactis), this protein is Oligopeptide transport system permease protein OppC (oppC).